Reading from the N-terminus, the 200-residue chain is Putative protein ATXN8OS (200 aa).

Positions 19–39 (PFSGLKEEEEEDGEDDEEEEE) are disordered. Residues 25–39 (EEEEEDGEDDEEEEE) show a composition bias toward acidic residues.

As to expression, expressed in brain. Expressed in muscle tissues (at protein level).

It is found in the cytoplasm. In Homo sapiens (Human), this protein is Putative protein ATXN8OS.